Here is a 4561-residue protein sequence, read N- to C-terminus: StAR-related lipid transfer protein 9 (4561 aa).

The 382-residue stretch at 3-384 (NVQVAVRVRP…MRYASNAKNI (382 aa)) folds into the Kinesin motor domain. An ATP-binding site is contributed by 103 to 110 (GQTGSGKT). The segment covering 307-321 (SSGGDSGVPSTTSGA) has biased composition (low complexity). Positions 307-330 (SSGGDSGVPSTTSGASSGGGPARR) are disordered. One can recognise an FHA domain in the interval 482–533 (TKIGRIDSDQEQDIVLQGQWIERDHCTITSTCGVVILRPTQGARCTVNGREV). Disordered regions lie at residues 784 to 805 (SRAP…RRSR), 873 to 1064 (SRWR…DTES), and 1092 to 1153 (WNLP…PSDS). Polar residues-rich tracts occupy residues 789-805 (WASS…RRSR), 884-903 (ASTQ…SQEI), 911-920 (CQMSSQGQST), and 939-948 (RWASVNTKTG). Composition is skewed to basic and acidic residues over residues 1046 to 1060 (RPIK…RDLS) and 1124 to 1135 (SRGEYSMKDHGH). Ser-1164 is subject to Phosphoserine. Disordered stretches follow at residues 1288–1392 (PSGD…SDMS), 1700–1767 (REAW…EEEN), 1959–1980 (ECKA…EEKQ), 2077–2120 (TNAT…ADRL), 2320–2356 (LATG…LGGS), 2384–2427 (VSTS…SSLD), 2439–2467 (FLLQ…LPNS), 2622–2656 (KPRQ…DPLP), 2712–2735 (KDSI…SEKI), 2777–2800 (TGLE…GNVG), 3002–3067 (RSVE…PGTL), 3185–3207 (AQTE…REQL), 3246–3286 (ELNL…TSLK), 3645–3703 (EGAA…LRPE), 3790–3847 (SDLA…PQQS), and 3863–3913 (QPKT…GRTT). Basic and acidic residues predominate over residues 1300–1321 (DIHEIQPHDEKPKHWLSIEEPK). Composition is skewed to polar residues over residues 1328-1360 (LPQS…SQGL) and 1722-1741 (PKLS…TTTK). 2 stretches are compositionally biased toward basic and acidic residues: residues 1754 to 1767 (ELGK…EEEN) and 1970 to 1980 (QSKEEPLEEKQ). Positions 2077 to 2091 (TNATSNNNTQIQKLT) are enriched in polar residues. Over residues 2096 to 2110 (RSREYVQTRESESEH) the composition is skewed to basic and acidic residues. Polar residues-rich tracts occupy residues 2333 to 2351 (TRSS…TTHT) and 2399 to 2408 (TSTGSTTQEA). A coiled-coil region spans residues 2414–2463 (EATVQKERKNSSLDRISRQAEKRVSFLLQEDSNQGEEERQKAEETSEDQQ). Basic and acidic residues predominate over residues 2417–2427 (VQKERKNSSLD). Residues 2634-2647 (DSSEVIEKRKEASR) are compositionally biased toward basic and acidic residues. Polar residues-rich tracts occupy residues 3039 to 3054 (LKNN…SQTM) and 3187 to 3199 (TEPS…THSQ). Positions 3689-3700 (PASPDGSPPPSL) are enriched in pro residues. Over residues 3812–3835 (DSQRAESLDREGKSPLGKSSERLL) the composition is skewed to basic and acidic residues. The span at 3863–3874 (QPKTTTGDQSKL) shows a compositional bias: polar residues. Positions 4185–4224 (SDIELMLQEYRRAREEAKVEIAQARDRLKERTEQEKMRIR) form a coiled coil. One can recognise an START domain in the interval 4344 to 4561 (PYQDLAKHIV…VAKLASFLRS (218 aa)).

The protein belongs to the TRAFAC class myosin-kinesin ATPase superfamily. Kinesin family. Interacts with ATAD3A.

The protein resides in the cytoplasm. The protein localises to the cytoskeleton. It is found in the microtubule organizing center. It localises to the centrosome. Its subcellular location is the centriole. The protein resides in the nucleus. Functionally, microtubule-dependent motor protein required for spindle pole assembly during mitosis. Required to stabilize the pericentriolar material (PCM). The polypeptide is StAR-related lipid transfer protein 9 (Stard9) (Mus musculus (Mouse)).